A 95-amino-acid polypeptide reads, in one-letter code: MRTGRKTCTDYINKSFREQIIYKEEWLPRSIPTSLLTAAGSKSCIGDRGTNGRTEAEHDGIPHSRKKVSSAHFNPSTLLFLLKRLGHPVYLREGE.

The disordered stretch occupies residues 46 to 68 (GDRGTNGRTEAEHDGIPHSRKKV).

This is an uncharacterized protein from Schizosaccharomyces pombe (strain 972 / ATCC 24843) (Fission yeast).